A 214-amino-acid chain; its full sequence is Probable chemoreceptor glutamine deamidase CheD (214 aa).

The protein belongs to the CheD family.

It catalyses the reaction L-glutaminyl-[protein] + H2O = L-glutamyl-[protein] + NH4(+). Functionally, probably deamidates glutamine residues to glutamate on methyl-accepting chemotaxis receptors (MCPs), playing an important role in chemotaxis. The chain is Probable chemoreceptor glutamine deamidase CheD from Vibrio vulnificus (strain YJ016).